The sequence spans 310 residues: Protease HtpX homolog (310 aa).

Transmembrane regions (helical) follow at residues 16 to 36 (NAVL…VDVI) and 55 to 75 (IFPT…VVCI). His166 serves as a coordination point for Zn(2+). Residue Glu167 is part of the active site. A Zn(2+)-binding site is contributed by His170. 2 helical membrane-spanning segments follow: residues 182–202 (VGIL…FFMG) and 214–234 (MILL…QMYL). A Zn(2+)-binding site is contributed by Glu239.

Belongs to the peptidase M48B family. Zn(2+) serves as cofactor.

It is found in the cell inner membrane. The polypeptide is Protease HtpX homolog (Helicobacter pylori (strain Shi470)).